We begin with the raw amino-acid sequence, 399 residues long: Elongation factor Tu 1 (399 aa).

The tr-type G domain maps to 17-208; that stretch reads KPHVNVGTIG…LDDYVEVPPR (192 aa). The G1 stretch occupies residues 26–33; the sequence is GHVDHGKT. 26–33 is a GTP binding site; it reads GHVDHGKT. Thr-33 lines the Mg(2+) pocket. Residues 62–66 are G2; the sequence is GITIA. Residues 83–86 are G3; it reads DCPG. GTP is bound by residues 83–87 and 138–141; these read DCPGH and NKAD. Residues 138 to 141 form a G4 region; sequence NKAD. A G5 region spans residues 175 to 177; the sequence is SAL.

Belongs to the TRAFAC class translation factor GTPase superfamily. Classic translation factor GTPase family. EF-Tu/EF-1A subfamily. As to quaternary structure, monomer.

It localises to the cytoplasm. It carries out the reaction GTP + H2O = GDP + phosphate + H(+). GTP hydrolase that promotes the GTP-dependent binding of aminoacyl-tRNA to the A-site of ribosomes during protein biosynthesis. The polypeptide is Elongation factor Tu 1 (Wolbachia sp. subsp. Brugia malayi (strain TRS)).